A 95-amino-acid chain; its full sequence is MAVTRTALLVVLVAGAMTMTMRGAEAQQPSCAAQLTQLAPCARVGVAPAPGQPLPAPPAECCSALGAVSHDCACGTLDIINSLPAKCGLPRVTCQ.

An N-terminal signal peptide occupies residues 1 to 26 (MAVTRTALLVVLVAGAMTMTMRGAEA). 4 cysteine pairs are disulfide-bonded: Cys31–Cys72, Cys41–Cys61, Cys62–Cys87, and Cys74–Cys94.

It belongs to the A9/FIL1 family. Anther.

The protein localises to the secreted. The polypeptide is Protein YY1 (Oryza sativa subsp. japonica (Rice)).